Reading from the N-terminus, the 67-residue chain is DNA-directed RNA polymerase subunit omega (67 aa).

It belongs to the RNA polymerase subunit omega family. In terms of assembly, the RNAP catalytic core consists of 2 alpha, 1 beta, 1 beta' and 1 omega subunit. When a sigma factor is associated with the core the holoenzyme is formed, which can initiate transcription.

The enzyme catalyses RNA(n) + a ribonucleoside 5'-triphosphate = RNA(n+1) + diphosphate. In terms of biological role, promotes RNA polymerase assembly. Latches the N- and C-terminal regions of the beta' subunit thereby facilitating its interaction with the beta and alpha subunits. The chain is DNA-directed RNA polymerase subunit omega from Moorella thermoacetica (strain ATCC 39073 / JCM 9320).